The primary structure comprises 88 residues: Defensin-like protein 98 (88 aa).

A signal peptide spans 1 to 29 (MGSLRVSTVVIAVVACLSILLISPTEVDG). 4 disulfides stabilise this stretch: C33–C76, C40–C62, C46–C73, and C50–C75.

This sequence belongs to the DEFL family.

It localises to the secreted. The protein is Defensin-like protein 98 of Arabidopsis thaliana (Mouse-ear cress).